Reading from the N-terminus, the 288-residue chain is Co-chaperone protein DjlA (288 aa).

The Periplasmic portion of the chain corresponds to 1–6; the sequence is MEFIGK. The helical transmembrane segment at 7-30 threads the bilayer; it reads IIGVFLGWKVGGFFGAIAGLILGS. Residues 31-288 are Cytoplasmic-facing; the sequence is IADKKLYELG…DLICKAKGWK (258 aa). The region spanning 222–288 is the J domain; that stretch reads DAYKVLGVTE…DLICKAKGWK (67 aa).

Homodimer.

The protein localises to the cell inner membrane. In terms of biological role, regulatory DnaK co-chaperone. Direct interaction between DnaK and DjlA is needed for the induction of the wcaABCDE operon, involved in the synthesis of a colanic acid polysaccharide capsule, possibly through activation of the RcsB/RcsC phosphotransfer signaling pathway. The colanic acid capsule may help the bacterium survive conditions outside the host. The sequence is that of Co-chaperone protein DjlA from Haemophilus influenzae (strain ATCC 51907 / DSM 11121 / KW20 / Rd).